The sequence spans 243 residues: Vesicle-associated membrane protein-associated protein B (243 aa).

An N-acetylalanine modification is found at A2. The Cytoplasmic segment spans residues 2–218 (AKVEQVLSLE…PASAMAGKEE (217 aa)). In terms of domain architecture, MSP spans 7–124 (VLSLEPQHEL…MDSKLRCVFE (118 aa)). S146 carries the post-translational modification Phosphoserine. K147 participates in a covalent cross-link: Glycyl lysine isopeptide (Lys-Gly) (interchain with G-Cter in SUMO1). T150 is modified (phosphothreonine). Residues S158, S159, and S160 each carry the phosphoserine modification. Residues 161–196 (LDDTEVKKVMEECKRLQSEVQRLREENKQFKEEDGL) are a coiled coil. Basic and acidic residues predominate over residues 186 to 197 (ENKQFKEEDGLR). The segment at 186–214 (ENKQFKEEDGLRMRKTAQSNSPAPASAMA) is disordered. A Phosphoserine modification is found at S206. The helical; Anchor for type IV membrane protein transmembrane segment at 219–239 (GLSTRLLALVVLFFIVGVIIG) threads the bilayer.

This sequence belongs to the VAMP-associated protein (VAP) (TC 9.B.17) family. As to quaternary structure, homodimer, and heterodimer with VAPA. Interacts with VAMP1 and VAMP2. Interacts (via MSP domain) with ZFYVE27. Interacts with RMDN3. Interacts with KIF5A in a ZFYVE27-dependent manner. Interacts (via MSP domain) with STARD3 (via phospho-FFAT motif). Interacts with STARD3NL (via FFAT motif). Interacts with CERT1. Interacts with PLEKHA3 and SACM1L to form a ternary complex. Interacts with VPS13A (via FFAT motif). Interacts with RB1CC1 (via phosphorylated FFAT motif), MIGA2 (via phosphorylated FFAT motif), RMDN3 (via phosphorylated FFAT motif), OSBPL1A (via FFAT motif), KCNB1 (via phosphorylated FFAT motif) and KCNB2 (via phosphorylated FFAT motif). Interacts (via MSP domain) with WDR44 (via FFAT motif); the interactions connect the endoplasmic reticulum (ER) with the endosomal tubule.

Its subcellular location is the endoplasmic reticulum membrane. In terms of biological role, endoplasmic reticulum (ER)-anchored protein that mediates the formation of contact sites between the ER and endosomes via interaction with FFAT motif-containing proteins such as STARD3 or WDR44. Interacts with STARD3 in a FFAT motif phosphorylation dependent manner. Via interaction with WDR44 participates in neosynthesized protein export. Participates in the endoplasmic reticulum unfolded protein response (UPR) by inducing ERN1/IRE1 activity. Involved in cellular calcium homeostasis regulation. The chain is Vesicle-associated membrane protein-associated protein B from Bos taurus (Bovine).